The primary structure comprises 587 residues: MPKQLSFSNDSREALENGVNTVANAVKVTIGPKAKNVVIERKFGSPDIVRDGSTVAKEINLDNPISNLGAKLIEQVASKTKESAGDGTTTATILTQIMVQEGLKNIAAGASPIELKKGMEKGLDIVLEKLKSKSIKINGSDIQKVATVSAGGDEEIGSIISKAMDIVTSDGVITVEESQSLETELDITEGMSFDRGYSSPYFVTDQERQICELENPKILITDQKISTLTNLVPILEEIQKSSSPFLVLAEDIEGEALTTLVLNKNSGVLNVSAVRAPSFGERRKAALEDIAILTGARLISEDQSMKLEEVTINDLGKAKKITISKDKTTIVAFDDTKDLVKARVEKLKREVEITESEYDKDKINERIAKLAGGVALIKVGAATETEMKYKKLRIEDSLNATKAAIEEGVVSGGGQTLIEISEELSNLGKEKSVDLNTGIKIITKALLEPTKQIARNAGFNGDVVIADIKRLNKGFNANNGQYENLNQSGILDPTKVIRLALQDSVSIAAMILTTEVAVADIPEPEAPAPGGPGADPMGGMGGMGGMGGMGMPGMGGMGMPGMGGMGMPGMGGMGMPGMGGMGMPGMM.

ATP is bound by residues 29-32 (TIGP), 86-90 (DGTTT), glycine 413, and aspartate 492.

This sequence belongs to the chaperonin (HSP60) family. Forms a cylinder of 14 subunits composed of two heptameric rings stacked back-to-back. Interacts with the co-chaperonin GroES.

Its subcellular location is the cytoplasm. It catalyses the reaction ATP + H2O + a folded polypeptide = ADP + phosphate + an unfolded polypeptide.. In terms of biological role, together with its co-chaperonin GroES, plays an essential role in assisting protein folding. The GroEL-GroES system forms a nano-cage that allows encapsulation of the non-native substrate proteins and provides a physical environment optimized to promote and accelerate protein folding. This Prochlorococcus marinus (strain MIT 9515) protein is Chaperonin GroEL 1.